We begin with the raw amino-acid sequence, 36 residues long: Pancreatic polypeptide (36 aa).

Phenylalanine 36 carries the phenylalanine amide modification.

It belongs to the NPY family.

The protein resides in the secreted. Functionally, hormone secreted by pancreatic cells that acts as a regulator of pancreatic and gastrointestinal functions. The polypeptide is Pancreatic polypeptide (ppy) (Rana temporaria (European common frog)).